Consider the following 1562-residue polypeptide: Cell surface antigen I/II (1562 aa).

The N-terminal stretch at 1–38 (MKVKKTYGFRKSKISKTLCGAVLGTVAAVSVAGQKVFA) is a signal peptide. A compositionally biased stretch (low complexity) spans 42 to 54 (TTTSDVDTKVVGT). The interval 42-91 (TTTSDVDTKVVGTQTGNPATNLPEAQGSASKEAEQSQNQAGETNGSIPVE) is disordered. The segment at 60-551 (ATNLPEAQGS…SKAKYDQKIL (492 aa)) is helical. Positions 76 to 87 (QSQNQAGETNGS) are enriched in polar residues. Ag I/II A repeat units lie at residues 147–221 (KKTT…QKTN), 222–303 (AANQ…QEAN), 304–385 (AANE…KKAN), and 386–467 (AANE…QKDL). Disordered regions lie at residues 824-973 (VPKV…PTDP) and 1482-1509 (SNTV…RTST). Pro residues predominate over residues 943-958 (PTPPTPTPDQPEPNKP). A compositionally biased stretch (low complexity) spans 1500–1509 (QDPSSPRTST). The LPXTG sorting signal motif lies at 1529–1533 (LPNTG). Thr-1532 is modified (pentaglycyl murein peptidoglycan amidated threonine). Positions 1533–1562 (GVTNNAYMPLLGIIGLVTSFSLLGLKAKKD) are cleaved as a propeptide — removed by sortase.

It belongs to the antigen I/II family. In terms of processing, detected as a 185 kDa cell surface protein, but also as 2 proteins in S.mutans culture supernatants of about 150 kDa (antigen I) and 50 kDa (antigen II); antigen II is only seen after proteolysis. Antigen I and II have the same N-terminus but different C-termini.

The protein localises to the secreted. Its subcellular location is the cell wall. Its function is as follows. Surface protein antigen implicated in dental caries. In Streptococcus mutans serotype c (strain ATCC 700610 / UA159), this protein is Cell surface antigen I/II.